The chain runs to 96 residues: Uteroglobin (96 aa).

A signal peptide spans 1 to 21; sequence MKIAITITVVMLSICCSSASS.

It belongs to the secretoglobin family. As to quaternary structure, antiparallel homodimer; disulfide-linked. Interaction with LMBR1L is controversial. In terms of tissue distribution, club cells (nonciliated cells of the surface epithelium of the pulmonary airways).

Its subcellular location is the secreted. Functionally, binds phosphatidylcholine, phosphatidylinositol, polychlorinated biphenyls (PCB) and weakly progesterone, potent inhibitor of phospholipase A2. This chain is Uteroglobin (Scgb1a1), found in Mus musculus (Mouse).